The following is a 72-amino-acid chain: U1-sicaritoxin-Sdo1a (72 aa).

Residues Met1 to Ala24 form the signal peptide. The propeptide occupies Glu25 to Met41. 3 disulfide bridges follow: Cys43–Cys61, Cys50–Cys64, and Cys60–Cys69.

As to expression, expressed by the venom gland.

It is found in the secreted. This chain is U1-sicaritoxin-Sdo1a, found in Hexophthalma dolichocephala (Afrotropical spider).